Consider the following 36-residue polypeptide: Photosystem I reaction center subunit VIII (36 aa).

The helical transmembrane segment at 6–26 (LPSIFVPLVGLVFPAIAMASL) threads the bilayer.

The protein belongs to the PsaI family.

The protein resides in the plastid. The protein localises to the chloroplast thylakoid membrane. Its function is as follows. May help in the organization of the PsaL subunit. This is Photosystem I reaction center subunit VIII from Drimys granadensis.